The chain runs to 887 residues: ABC transporter A family member 10 (887 aa).

The next 7 membrane-spanning stretches (helical) occupy residues 38 to 58 (GIQY…VITL), 198 to 218 (YLYV…LLVT), 245 to 265 (IIIV…VVLY), 277 to 297 (VMLF…GIIL), 309 to 329 (AISS…QFYL), 335 to 355 (SSWL…EFLY), and 376 to 396 (ISFL…WYIT). The segment covering 443 to 469 (NNCNNNNTSPSSSSSSQSSPLNKPLLS) has biased composition (low complexity). A disordered region spans residues 443–474 (NNCNNNNTSPSSSSSSQSSPLNKPLLSGDSDD). Residues 481–728 (IRLVNLKKTY…FNLGYILTIV (248 aa)) form the ABC transporter domain. Residue 519 to 526 (GQNGSGKT) coordinates ATP. Low complexity predominate over residues 774-797 (NNNNNENNSNNSDGSSSSSDSSSS). Positions 774-799 (NNNNNENNSNNSDGSSSSSDSSSSKD) are disordered.

The protein belongs to the ABC transporter superfamily. ABCA family.

It is found in the membrane. The chain is ABC transporter A family member 10 (abcA10) from Dictyostelium discoideum (Social amoeba).